The following is a 344-amino-acid chain: Small ribosomal subunit protein uS3 (344 aa).

One can recognise a KH type-2 domain in the interval 38-106 (LKAALRERLK…EVFIDIQEVH (69 aa)). The disordered stretch occupies residues 217–344 (PEPEPRREQR…QKPEGSGENQ (128 aa)). 2 stretches are compositionally biased toward basic and acidic residues: residues 219 to 259 (PEPR…RGDR) and 335 to 344 (QKPEGSGENQ).

This sequence belongs to the universal ribosomal protein uS3 family. In terms of assembly, part of the 30S ribosomal subunit. Forms a tight complex with proteins S10 and S14.

Binds the lower part of the 30S subunit head. Binds mRNA in the 70S ribosome, positioning it for translation. The sequence is that of Small ribosomal subunit protein uS3 from Solibacter usitatus (strain Ellin6076).